The sequence spans 280 residues: MEAVSSEYYFPLYSALGYFALVFGIGEIARIITAKYVSPRGNSQLFLYELIGTIQMCTCVYENGIIFKNYGFPAIFICVALLLTAGNIFNRGAMTNCAPIFEQFVFGNLGSSKFLTILSAQLIGATFASKFAYLIWNITAPYSTAHLENASNLECILHYKQTAGIVIGFEIVGAFVVRIVVAQLLARPALIKLIPFAISAYLSLALYVVGVPGLNPIVATARLYGCRGIDNSSFFILYWFCPVLGWLTGAYVVGQKSPSKKSAKDVKAEKKAKAAAKKSD.

Residues 1–8 are Cytoplasmic-facing; sequence MEAVSSEY. Residues 9 to 29 traverse the membrane as a helical segment; that stretch reads YFPLYSALGYFALVFGIGEIA. Over 30–64 the chain is Extracellular; sequence RIITAKYVSPRGNSQLFLYELIGTIQMCTCVYENG. Residues 65–85 traverse the membrane as a helical segment; the sequence is IIFKNYGFPAIFICVALLLTA. Residues 86-114 lie on the Cytoplasmic side of the membrane; the sequence is GNIFNRGAMTNCAPIFEQFVFGNLGSSKF. A helical membrane pass occupies residues 115–135; that stretch reads LTILSAQLIGATFASKFAYLI. Residues 136 to 164 lie on the Extracellular side of the membrane; sequence WNITAPYSTAHLENASNLECILHYKQTAG. A helical transmembrane segment spans residues 165–185; the sequence is IVIGFEIVGAFVVRIVVAQLL. The Cytoplasmic portion of the chain corresponds to 186–193; it reads ARPALIKL. The helical transmembrane segment at 194-214 threads the bilayer; sequence IPFAISAYLSLALYVVGVPGL. Over 215–233 the chain is Extracellular; that stretch reads NPIVATARLYGCRGIDNSS. Residues 234–254 form a helical membrane-spanning segment; that stretch reads FFILYWFCPVLGWLTGAYVVG. Topologically, residues 255–280 are cytoplasmic; it reads QKSPSKKSAKDVKAEKKAKAAAKKSD. The tract at residues 256–280 is disordered; sequence KSPSKKSAKDVKAEKKAKAAAKKSD. Over residues 262-280 the composition is skewed to basic and acidic residues; it reads SAKDVKAEKKAKAAAKKSD.

The protein belongs to the MIP/aquaporin (TC 1.A.8) family.

It is found in the membrane. This is Putative aquaporin-10 (aqp-10) from Caenorhabditis elegans.